A 374-amino-acid chain; its full sequence is Muconate cycloisomerase 1 (374 aa).

The protein belongs to the cycloisomerase 2 family. Homotetramer.

It carries out the reaction (S)-muconolactone = cis,cis-muconate + H(+). It participates in aromatic compound metabolism; beta-ketoadipate pathway; 5-oxo-4,5-dihydro-2-furylacetate from catechol: step 2/3. Catalyzes a syn cycloisomerization. This Cutaneotrichosporon cutaneum (Yeast) protein is Muconate cycloisomerase 1.